The primary structure comprises 201 residues: IMP cyclohydrolase (201 aa).

It belongs to the archaeal IMP cyclohydrolase family.

The catalysed reaction is IMP + H2O = 5-formamido-1-(5-phospho-D-ribosyl)imidazole-4-carboxamide. It functions in the pathway purine metabolism; IMP biosynthesis via de novo pathway; IMP from 5-formamido-1-(5-phospho-D-ribosyl)imidazole-4-carboxamide: step 1/1. In terms of biological role, catalyzes the cyclization of 5-formylamidoimidazole-4-carboxamide ribonucleotide to IMP. The polypeptide is IMP cyclohydrolase (Methanococcus maripaludis (strain C7 / ATCC BAA-1331)).